We begin with the raw amino-acid sequence, 505 residues long: Lysine--tRNA ligase (505 aa).

Residues glutamate 415 and glutamate 422 each contribute to the Mg(2+) site.

It belongs to the class-II aminoacyl-tRNA synthetase family. In terms of assembly, homodimer. Requires Mg(2+) as cofactor.

It localises to the cytoplasm. It catalyses the reaction tRNA(Lys) + L-lysine + ATP = L-lysyl-tRNA(Lys) + AMP + diphosphate. The sequence is that of Lysine--tRNA ligase from Salmonella typhi.